The sequence spans 358 residues: Protein RecA (358 aa).

An ATP-binding site is contributed by 66–73 (GPESSGKT).

It belongs to the RecA family.

The protein resides in the cytoplasm. Its function is as follows. Can catalyze the hydrolysis of ATP in the presence of single-stranded DNA, the ATP-dependent uptake of single-stranded DNA by duplex DNA, and the ATP-dependent hybridization of homologous single-stranded DNAs. It interacts with LexA causing its activation and leading to its autocatalytic cleavage. This chain is Protein RecA, found in Herpetosiphon aurantiacus (strain ATCC 23779 / DSM 785 / 114-95).